The following is a 178-amino-acid chain: ATP synthase subunit delta (178 aa).

It belongs to the ATPase delta chain family. F-type ATPases have 2 components, F(1) - the catalytic core - and F(0) - the membrane proton channel. F(1) has five subunits: alpha(3), beta(3), gamma(1), delta(1), epsilon(1). F(0) has three main subunits: a(1), b(2) and c(10-14). The alpha and beta chains form an alternating ring which encloses part of the gamma chain. F(1) is attached to F(0) by a central stalk formed by the gamma and epsilon chains, while a peripheral stalk is formed by the delta and b chains.

It localises to the cell membrane. In terms of biological role, f(1)F(0) ATP synthase produces ATP from ADP in the presence of a proton or sodium gradient. F-type ATPases consist of two structural domains, F(1) containing the extramembraneous catalytic core and F(0) containing the membrane proton channel, linked together by a central stalk and a peripheral stalk. During catalysis, ATP synthesis in the catalytic domain of F(1) is coupled via a rotary mechanism of the central stalk subunits to proton translocation. Its function is as follows. This protein is part of the stalk that links CF(0) to CF(1). It either transmits conformational changes from CF(0) to CF(1) or is implicated in proton conduction. This Streptococcus pyogenes serotype M4 (strain MGAS10750) protein is ATP synthase subunit delta.